The sequence spans 745 residues: Protein transport protein SEC23 D (745 aa).

Zn(2+)-binding residues include C53, C56, C73, and C76. The zinc finger-like stretch occupies residues C53–C76.

Belongs to the SEC23/SEC24 family. SEC24 subfamily. Component of the coat protein complex II (COPII), composed of at least five proteins: the Sec23/24 complex, the Sec13/31 complex and Sar1. Mostly expressed in closed floral bud, pollen and flowers, and, to a lower extent, in mature siliques, roots and leaf primordia.

Its subcellular location is the cytoplasmic vesicle. The protein resides in the COPII-coated vesicle membrane. It localises to the endoplasmic reticulum membrane. It is found in the membrane. Functionally, component of the coat protein complex II (COPII) which promotes the formation of transport vesicles from the endoplasmic reticulum (ER). The coat has two main functions, the physical deformation of the endoplasmic reticulum membrane into vesicles and the selection of cargo molecules. May contribute to COPII-coated vesicles formation and ER-Golgi vesicle transport. Together with SEC23A, essential for pollen wall development and exine patterning, probably by regulating endoplasmic reticulum (ER) export of lipids and proteins (e.g. sporopollenin) necessary for pollen wall formation. Also involved in plastid physiology in anther tapetal cells. This Arabidopsis thaliana (Mouse-ear cress) protein is Protein transport protein SEC23 D.